The chain runs to 540 residues: MAVSSGNSSVNSSKKLFSGKKGQSIGIVRSMNYKIPGTFGLESGKTLSGVRVEYEMYGKMNADKSNVILICHALTGDAHAAGFHEGDKKPGWWEIVIGPNKAFDTEKYCVICSNILGGCKGSTGPSSIDPETGKHYGISFPVITVKDMVNAQKKLIEHLGVKQLFAVAGGSMGGMQVLQWTVSYPEMVRKAIAIATTASTTPQQIAFGAIGRKAITDDPKWNGGDYYGKEIPSQGLALARMIGHITYLSDASMQNKFGRLQQDTDKSGIKGTTGTEGKNSSEISSEISSISSEISSELSYDFTPNFQVESYLNYKGDNFTKRFDANSYLYITKAVDYFDLAKNGSLIEGFSGVTAKYLVISISSDWLYPPYQSQEIVSALTANGVDARYEEIRSQHGHDAFLLEEGQLSYLLRSFLSHILVSDVMNRNFYTVSRDETIEHSSKLMVKECVSHLPVISEDGKLEGIVTSWDITKAVACKINELDEIITRDVKYVYEDEKIEHASSIMEKHSISALPVIDSEHRIIGIVTSESISALFGKYD.

The AB hydrolase-1 domain maps to 66–404 (NVILICHALT…QHGHDAFLLE (339 aa)). The active-site Nucleophile is the serine 171. Residue arginine 240 coordinates substrate. The interval 262 to 284 (QDTDKSGIKGTTGTEGKNSSEIS) is disordered. Active-site residues include aspartate 365 and histidine 398. Aspartate 399 lines the substrate pocket. 2 CBS domains span residues 425 to 484 (MNRN…ELDE) and 486 to 540 (ITRD…GKYD).

Belongs to the AB hydrolase superfamily. MetX family. As to quaternary structure, homodimer.

It is found in the cytoplasm. It carries out the reaction L-homoserine + acetyl-CoA = O-acetyl-L-homoserine + CoA. The protein operates within amino-acid biosynthesis; L-methionine biosynthesis via de novo pathway; O-acetyl-L-homoserine from L-homoserine: step 1/1. Transfers an acetyl group from acetyl-CoA to L-homoserine, forming acetyl-L-homoserine. In vitro, can also use propionyl-CoA or butiryl-CoA as acyl donor. This chain is Homoserine O-acetyltransferase, found in Methanosarcina acetivorans (strain ATCC 35395 / DSM 2834 / JCM 12185 / C2A).